Reading from the N-terminus, the 221-residue chain is Veficolin-1 (221 aa).

Positions 1-25 (MTAWLDFPLALSPLVVVSMKGGSFG) are cleaved as a signal peptide. The region spanning 50-104 (QGQAGIPGIPGVPGTNGLPGAKGDLGPQGPPGERGSTGIPGKAGPKGDKGDQGEA) is the Collagen-like domain. Positions 54-104 (GIPGIPGVPGTNGLPGAKGDLGPQGPPGERGSTGIPGKAGPKGDKGDQGEA) are disordered. Positions 111 to 221 (QQQEAGAKDC…DFNNSKTFAK (111 aa)) constitute a Fibrinogen C-terminal domain. Residues cysteine 120 and cysteine 148 are joined by a disulfide bond.

This sequence belongs to the ficolin lectin family. Veficolin subfamily. As to expression, expressed by the mandibular venom duct.

It localises to the secreted. Its function is as follows. Initiates complement activation and/or interferes in platelet aggregation and/or blood coagulation. The protein is Veficolin-1 of Varanus komodoensis (Komodo dragon).